The primary structure comprises 172 residues: uncharacterized protein (172 aa).

4 consecutive transmembrane segments (helical) span residues 20–40 (LVLITISIIALSTAYIAEYIF), 48–68 (CVYERFPYLMLIKISLTALII), 76–96 (LILILITILSSCILSTYHSFV), and 146–166 (MTEYNLLLNICLLIFLGLILF).

It is found in the cell membrane. This is an uncharacterized protein from Rickettsia prowazekii (strain Madrid E).